Reading from the N-terminus, the 461-residue chain is Pup--protein ligase (461 aa).

Position 9 (glutamate 9) interacts with Mg(2+). Arginine 53 is an ATP binding site. Position 55 (tyrosine 55) interacts with Mg(2+). Aspartate 57 (proton acceptor) is an active-site residue. Glutamate 63 contacts Mg(2+). 2 residues coordinate ATP: threonine 66 and tryptophan 420.

Belongs to the Pup ligase/Pup deamidase family. Pup-conjugating enzyme subfamily.

It catalyses the reaction ATP + [prokaryotic ubiquitin-like protein]-L-glutamate + [protein]-L-lysine = ADP + phosphate + N(6)-([prokaryotic ubiquitin-like protein]-gamma-L-glutamyl)-[protein]-L-lysine.. It functions in the pathway protein degradation; proteasomal Pup-dependent pathway. Its pathway is protein modification; protein pupylation. In terms of biological role, catalyzes the covalent attachment of the prokaryotic ubiquitin-like protein modifier Pup to the proteasomal substrate proteins, thereby targeting them for proteasomal degradation. This tagging system is termed pupylation. The ligation reaction involves the side-chain carboxylate of the C-terminal glutamate of Pup and the side-chain amino group of a substrate lysine. The sequence is that of Pup--protein ligase from Renibacterium salmoninarum (strain ATCC 33209 / DSM 20767 / JCM 11484 / NBRC 15589 / NCIMB 2235).